We begin with the raw amino-acid sequence, 249 residues long: Protein obstructor-E (249 aa).

Residues M1 to G21 form the signal peptide. The 59-residue stretch at S22–E80 folds into the Chitin-binding type-2 1 domain. Residues C54 and C70 are joined by a disulfide bond. N88 is a glycosylation site (N-linked (GlcNAc...) asparagine). 2 Chitin-binding type-2 domains span residues T90–A148 and V170–A227. 2 cysteine pairs are disulfide-bonded: C124–C137 and C203–C216.

As to expression, uniformly expressed throughout the cuticle of third instar larva.

It is found in the secreted. Its subcellular location is the extracellular space. The protein localises to the extracellular matrix. Its function is as follows. Chitin-binding protein that is important for the longitudinal contraction and lateral expansion of the larval cuticle during its conversion into the oval-shaped puparium case. Essential for survival to the second instar larval stage. Confers the orientated contractility and expandability of the larval cuticle by regulating the arrangement of chitin and the formation of supracellular ridges on the cuticle of third instar larvae. Essential for determining pupal body shape; required for the orientated shape change of the cuticle during metamorphosis which involves changes in the morphology of the supracellular ridges. Functionally, mainly involved in regulating pupal shape. In terms of biological role, mainly involved in larvae survival, possibly by maintaining the normal morphology of the larval hindgut during development. The sequence is that of Protein obstructor-E from Drosophila melanogaster (Fruit fly).